We begin with the raw amino-acid sequence, 653 residues long: 23S rRNA 5-hydroxycytidine C2501 synthase (653 aa).

Belongs to the peptidase U32 family. As to quaternary structure, interacts with precursors of the 50S ribosomal subunit.

Its activity is regulated as follows. Iron-sulfur clusters and prephenate are required for ho5C2501 formation. Responsible for the formation of the 5-hydroxycytidine modification at the C2501 position (ho5C2501) of 23S rRNA. May be a Fe-S protein that catalyzes ho5C2501 formation using prephenate as a hydroxyl group donor. The chain is 23S rRNA 5-hydroxycytidine C2501 synthase from Escherichia coli (strain K12).